We begin with the raw amino-acid sequence, 305 residues long: Porphobilinogen deaminase (305 aa).

An S-(dipyrrolylmethanemethyl)cysteine modification is found at C241.

It belongs to the HMBS family. Monomer. Dipyrromethane is required as a cofactor.

The enzyme catalyses 4 porphobilinogen + H2O = hydroxymethylbilane + 4 NH4(+). The protein operates within porphyrin-containing compound metabolism; protoporphyrin-IX biosynthesis; coproporphyrinogen-III from 5-aminolevulinate: step 2/4. Tetrapolymerization of the monopyrrole PBG into the hydroxymethylbilane pre-uroporphyrinogen in several discrete steps. In Exiguobacterium sp. (strain ATCC BAA-1283 / AT1b), this protein is Porphobilinogen deaminase.